The following is a 437-amino-acid chain: Matrix remodeling-associated protein 8 (437 aa).

The N-terminal stretch at 1 to 22 is a signal peptide; that stretch reads MEQLAKLLLWQLLLQQSSVVYL. The Extracellular portion of the chain corresponds to 23-339; it reads YSVPADASNP…PESRIHFFQQ (317 aa). Ig-like V-type domains lie at 32 to 159 and 167 to 294; these read PDSV…LDIT and EYWD…VFVT. 4 N-linked (GlcNAc...) asparagine glycosylation sites follow: Asn41, Asn121, Asn246, and Asn304. Cystine bridges form between Cys54/Cys139 and Cys188/Cys274. The helical transmembrane segment at 340–360 threads the bilayer; it reads LGYVLATLLLFVVLLIIVVFI. Residues 361 to 437 lie on the Cytoplasmic side of the membrane; it reads TRKRRQRGYE…DKDFRKEYCK (77 aa).

Homodimer in cis. Does not appear to form trans-homodimers.

The protein localises to the cell membrane. Transmembrane protein which can modulate activity of various signaling pathways, probably via binding to integrin ITGAV:ITGB3. Mediates heterophilic cell-cell interactions in vitro. The sequence is that of Matrix remodeling-associated protein 8 (MXRA8) from Gallus gallus (Chicken).